A 240-amino-acid chain; its full sequence is Uridylate kinase (240 aa).

Lys-12 to Gly-15 is an ATP binding site. Positions Gly-20–Gly-25 are involved in allosteric activation by GTP. Gly-54 contacts UMP. The ATP site is built by Gly-55 and Arg-59. UMP-binding positions include Asp-74 and Thr-135–Thr-142. Residues Asn-163, Tyr-169, and Asp-172 each coordinate ATP.

It belongs to the UMP kinase family. Homohexamer.

It is found in the cytoplasm. The catalysed reaction is UMP + ATP = UDP + ADP. The protein operates within pyrimidine metabolism; CTP biosynthesis via de novo pathway; UDP from UMP (UMPK route): step 1/1. With respect to regulation, allosterically activated by GTP. Inhibited by UTP. Functionally, catalyzes the reversible phosphorylation of UMP to UDP. This Bacillus licheniformis (strain ATCC 14580 / DSM 13 / JCM 2505 / CCUG 7422 / NBRC 12200 / NCIMB 9375 / NCTC 10341 / NRRL NRS-1264 / Gibson 46) protein is Uridylate kinase.